Reading from the N-terminus, the 388-residue chain is MTIRNQRFSLLKQPIYSTLNQHLIDYPTPSNLSYWWGFGCLAGICLVIQIVTGVFLAMHYTPHVDLAFNSVEHIMRDVEGGWLLRYMHANGASMFLIVVHLHIFRGLYHASYSSPREFVWCLGVVIFLLMIVTAFIGYVPPWGQMSFWGATVITSLASAIPVVGDTIVTWLWGGFSVDNATLNRFFSLHHLLPLILAGASLLHLAALHQYGSNNPLGVHSEMDKIASYPYFYVKDLVGRVASAIFFSIWIFFAPNVLGHPDNYIPANPMPTPPHIVPEWYFLPIHAILRSIPDKAGGVAAIAPVFISLLALPFFKEMYVRSSSFRPIHQGIFWLLLADCLLLGWIGCQPVEAPFVTIGQISSFFFFLFFAITPIPGRVGRGIPKYYTE.

4 helical membrane passes run 38-58 (FGCL…FLAM), 82-104 (WLLR…LHIF), 119-139 (VWCL…IGYV), and 185-205 (FFSL…LHLA). His88 and His102 together coordinate heme b. 2 residues coordinate heme b: His189 and His203. Position 208 (His208) interacts with a ubiquinone. 4 helical membrane-spanning segments follow: residues 231–251 (FYVK…IWIF), 295–315 (AGGV…PFFK), 327–347 (IHQG…WIGC), and 354–373 (FVTI…AITP).

It belongs to the cytochrome b family. The main subunits of complex b-c1 are: cytochrome b, cytochrome c1 and the Rieske protein. Heme b is required as a cofactor.

The protein localises to the mitochondrion inner membrane. Functionally, component of the ubiquinol-cytochrome c reductase complex (complex III or cytochrome b-c1 complex) that is part of the mitochondrial respiratory chain. The b-c1 complex mediates electron transfer from ubiquinol to cytochrome c. Contributes to the generation of a proton gradient across the mitochondrial membrane that is then used for ATP synthesis. In Zea mays (Maize), this protein is Cytochrome b (MT-CYB).